The sequence spans 345 residues: Flotillin-like protein FloA 1 (345 aa).

A helical transmembrane segment spans residues 26–46; the sequence is LLLLVGVFLALFFAAVLGFFF.

This sequence belongs to the flotillin-like FloA family. Homooligomerizes.

Its subcellular location is the cell membrane. The protein localises to the membrane raft. In terms of biological role, found in functional membrane microdomains (FMM) that may be equivalent to eukaryotic membrane rafts. FMMs are highly dynamic and increase in number as cells age. Flotillins are thought to be important factors in membrane fluidity. The polypeptide is Flotillin-like protein FloA 1 (Rhodopirellula baltica (strain DSM 10527 / NCIMB 13988 / SH1)).